Reading from the N-terminus, the 460-residue chain is tRNA-2-methylthio-N(6)-dimethylallyladenosine synthase (460 aa).

One can recognise an MTTase N-terminal domain in the interval 10-126; the sequence is GSYWITTFGC…LEVLLNRVDS (117 aa). [4Fe-4S] cluster is bound by residues Cys19, Cys55, Cys89, Cys161, Cys165, and Cys168. The 238-residue stretch at 147 to 384 folds into the Radical SAM core domain; it reads RDSSICGWVN…NALVERCARE (238 aa). The TRAM domain occupies 387-455; sequence ARYAGRTEEV…SFSLSGTPLP (69 aa).

The protein belongs to the methylthiotransferase family. MiaB subfamily. Monomer. The cofactor is [4Fe-4S] cluster.

The protein resides in the cytoplasm. It catalyses the reaction N(6)-dimethylallyladenosine(37) in tRNA + (sulfur carrier)-SH + AH2 + 2 S-adenosyl-L-methionine = 2-methylsulfanyl-N(6)-dimethylallyladenosine(37) in tRNA + (sulfur carrier)-H + 5'-deoxyadenosine + L-methionine + A + S-adenosyl-L-homocysteine + 2 H(+). Its function is as follows. Catalyzes the methylthiolation of N6-(dimethylallyl)adenosine (i(6)A), leading to the formation of 2-methylthio-N6-(dimethylallyl)adenosine (ms(2)i(6)A) at position 37 in tRNAs that read codons beginning with uridine. The sequence is that of tRNA-2-methylthio-N(6)-dimethylallyladenosine synthase from Parasynechococcus marenigrum (strain WH8102).